We begin with the raw amino-acid sequence, 183 residues long: Cell division protein ZapC (183 aa).

It belongs to the ZapC family. Interacts directly with FtsZ.

It is found in the cytoplasm. In terms of biological role, contributes to the efficiency of the cell division process by stabilizing the polymeric form of the cell division protein FtsZ. Acts by promoting interactions between FtsZ protofilaments and suppressing the GTPase activity of FtsZ. This Xenorhabdus bovienii (strain SS-2004) (Xenorhabdus nematophila subsp. bovienii) protein is Cell division protein ZapC.